The sequence spans 250 residues: Heme oxygenase 2 (250 aa).

A heme b-binding site is contributed by histidine 16. The interval 228-250 (QDRPGSTEARSTAGHPITLMVGE) is disordered.

It belongs to the heme oxygenase family. As to quaternary structure, homodimer.

The catalysed reaction is heme b + 3 reduced [NADPH--hemoprotein reductase] + 3 O2 = biliverdin IXalpha + CO + Fe(2+) + 3 oxidized [NADPH--hemoprotein reductase] + 3 H2O + H(+). Its function is as follows. Catalyzes the opening of the heme ring with the release of iron. Key enzyme in the synthesis of the chromophoric part of the photosynthetic antennae. This is Heme oxygenase 2 (pbsA2) from Synechocystis sp. (strain ATCC 27184 / PCC 6803 / Kazusa).